The primary structure comprises 256 residues: Protein FixA (256 aa).

It belongs to the ETF beta-subunit/FixA family. In terms of assembly, heterodimer of FixA and FixB.

It functions in the pathway amine and polyamine metabolism; carnitine metabolism. In terms of biological role, required for anaerobic carnitine reduction. May bring reductant to CaiA. The protein is Protein FixA of Escherichia coli O17:K52:H18 (strain UMN026 / ExPEC).